We begin with the raw amino-acid sequence, 307 residues long: MEGRLNNMWRLTVNESKFVESALQSELRVDGRGLYDYRKLTIKFGKEYGSSQVQLGQTHVMAFVTAQLVQPYKDRPSEGSFSIFTEFSPMADPSFEPGHPGESAVELGRIIDRALRESRAVDTESLCVLAGKLVWSVRIDLHILDNGGNLVDAANVAALAALMTFRRPDCTVGGDNSQDVIIHPPEEREPLPLIIHHLPIAFTFGFFNKGSILVMDPTYVEEAVMCGRMTVTVNANGDICAIQKPGEEGVNQSVILHCLRLASSRASATTKIIRDAVEAYNRERSSQKVKRHHTLAKSEVLGPIVVV.

It belongs to the RNase PH family. As to expression, expressed in roots, leaves, stems, buds and siliques.

Its subcellular location is the cytoplasm. It localises to the nucleus. Functionally, probable 3'-&gt;5' exoribonuclease involved in the regulation of cuticular wax biosynthesis. Can perform exosomal functions and partially complement the yeast rrp45 null mutant. The chain is Exosome complex component RRP45A from Arabidopsis thaliana (Mouse-ear cress).